A 421-amino-acid polypeptide reads, in one-letter code: D-amino acid dehydrogenase (421 aa).

Position 3–17 (3–17) interacts with FAD; sequence VIVLGSGVIGVASAY.

It belongs to the DadA oxidoreductase family. The cofactor is FAD.

It catalyses the reaction a D-alpha-amino acid + A + H2O = a 2-oxocarboxylate + AH2 + NH4(+). The protein operates within amino-acid degradation; D-alanine degradation; NH(3) and pyruvate from D-alanine: step 1/1. In terms of biological role, oxidative deamination of D-amino acids. The sequence is that of D-amino acid dehydrogenase from Acinetobacter baumannii (strain AB307-0294).